Consider the following 311-residue polypeptide: Aspartate carbamoyltransferase catalytic subunit (311 aa).

Residues Arg55 and Thr56 each coordinate carbamoyl phosphate. L-aspartate is bound at residue Lys84. Arg105, His133, and Gln136 together coordinate carbamoyl phosphate. L-aspartate contacts are provided by Arg166 and Arg229. Carbamoyl phosphate is bound by residues Leu268 and Pro269.

It belongs to the aspartate/ornithine carbamoyltransferase superfamily. ATCase family. As to quaternary structure, heterododecamer (2C3:3R2) of six catalytic PyrB chains organized as two trimers (C3), and six regulatory PyrI chains organized as three dimers (R2).

The catalysed reaction is carbamoyl phosphate + L-aspartate = N-carbamoyl-L-aspartate + phosphate + H(+). The protein operates within pyrimidine metabolism; UMP biosynthesis via de novo pathway; (S)-dihydroorotate from bicarbonate: step 2/3. Catalyzes the condensation of carbamoyl phosphate and aspartate to form carbamoyl aspartate and inorganic phosphate, the committed step in the de novo pyrimidine nucleotide biosynthesis pathway. The chain is Aspartate carbamoyltransferase catalytic subunit from Alkaliphilus metalliredigens (strain QYMF).